Consider the following 239-residue polypeptide: Ribonuclease HII (239 aa).

Positions 30–221 (GPVAGVDEVG…VRRVANGSGG (192 aa)) constitute an RNase H type-2 domain. A divalent metal cation-binding residues include D36, E37, and D130.

The protein belongs to the RNase HII family. It depends on Mn(2+) as a cofactor. The cofactor is Mg(2+).

It is found in the cytoplasm. It catalyses the reaction Endonucleolytic cleavage to 5'-phosphomonoester.. In terms of biological role, endonuclease that specifically degrades the RNA of RNA-DNA hybrids. This chain is Ribonuclease HII, found in Mycolicibacterium paratuberculosis (strain ATCC BAA-968 / K-10) (Mycobacterium paratuberculosis).